The chain runs to 244 residues: 3-deoxy-manno-octulosonate cytidylyltransferase (244 aa).

This sequence belongs to the KdsB family.

It is found in the cytoplasm. The enzyme catalyses 3-deoxy-alpha-D-manno-oct-2-ulosonate + CTP = CMP-3-deoxy-beta-D-manno-octulosonate + diphosphate. It functions in the pathway nucleotide-sugar biosynthesis; CMP-3-deoxy-D-manno-octulosonate biosynthesis; CMP-3-deoxy-D-manno-octulosonate from 3-deoxy-D-manno-octulosonate and CTP: step 1/1. Its pathway is bacterial outer membrane biogenesis; lipopolysaccharide biosynthesis. In terms of biological role, activates KDO (a required 8-carbon sugar) for incorporation into bacterial lipopolysaccharide in Gram-negative bacteria. This Synechococcus elongatus (strain ATCC 33912 / PCC 7942 / FACHB-805) (Anacystis nidulans R2) protein is 3-deoxy-manno-octulosonate cytidylyltransferase.